A 325-amino-acid polypeptide reads, in one-letter code: Solute-binding protein RD1_1052 (325 aa).

Positions 1 to 26 (MRLFTKIKGLAAVTCVAALASSAAFA) are cleaved as a signal peptide. Residues E75, 93 to 95 (GES), 148 to 151 (RGPR), R171, and N211 contribute to the D-mannonate site. L-galactonate is bound by residues E75, 93-95 (GES), 148-151 (RGPR), R171, and N211.

This sequence belongs to the bacterial solute-binding protein 7 family. In terms of assembly, the complex is comprised of an extracytoplasmic solute-binding protein and a heteromeric permease formed by two transmembrane proteins.

It localises to the periplasm. In terms of biological role, solute-binding protein that binds L-galactonate and D-mannonate (in vitro). Probably part of a tripartite ATP-independent periplasmic (TRAP) transport system that mediates solute transport into the cytoplasm. The chain is Solute-binding protein RD1_1052 from Roseobacter denitrificans (strain ATCC 33942 / OCh 114) (Erythrobacter sp. (strain OCh 114)).